Consider the following 75-residue polypeptide: Protein BsdD (75 aa).

Involved in the non-oxidative decarboxylation and detoxification of phenolic derivatives under both aerobic and anaerobic conditions, however the precise biochemical function of BsdD in metabolism of phenolic acid is unknown. In Bacillus subtilis (strain 168), this protein is Protein BsdD.